We begin with the raw amino-acid sequence, 155 residues long: Endoribonuclease YbeY (155 aa).

Zn(2+)-binding residues include H114, H118, and H124.

This sequence belongs to the endoribonuclease YbeY family. It depends on Zn(2+) as a cofactor.

It is found in the cytoplasm. Its function is as follows. Single strand-specific metallo-endoribonuclease involved in late-stage 70S ribosome quality control and in maturation of the 3' terminus of the 16S rRNA. This chain is Endoribonuclease YbeY, found in Citrobacter koseri (strain ATCC BAA-895 / CDC 4225-83 / SGSC4696).